The primary structure comprises 384 residues: MKTELTLLDHSYELLRYPAENQHVSWQAWDSADEYLMEYVAQNITDLNGLNIHIYNDDFGALGVWFATNNAPLWISDSFVAHKALALNLERNHLPIENVNVQNSLYKANQKADLVLIKVPKTLALLEQQLIDLQSSVTPETRIIAAGKANAIQKSTLALFEKHLGLTTTSLAKKKSRLIFCQYDGVKQSVSPYPTKWKTDNTQFIMSNLANVFSRQQLDIGARVLLAHLPDANHKCIVDLGCGNGVLGLHVLHKSPGAHVIFVDESFMAIASAKMNIEQNMPDKLDQCKFIVSNCLDECLSSGENEATVDIVLCNPPFHQQNTITDHIALQMFKDSKRILKHAGELRVVGNRHLDYPQTIKRLFGHYKVLASDRKFSILSAIKK.

It belongs to the methyltransferase superfamily. RlmG family.

It is found in the cytoplasm. It carries out the reaction guanosine(1835) in 23S rRNA + S-adenosyl-L-methionine = N(2)-methylguanosine(1835) in 23S rRNA + S-adenosyl-L-homocysteine + H(+). Specifically methylates the guanine in position 1835 (m2G1835) of 23S rRNA. This is Ribosomal RNA large subunit methyltransferase G from Pseudoalteromonas atlantica (strain T6c / ATCC BAA-1087).